A 377-amino-acid polypeptide reads, in one-letter code: Succinyl-diaminopimelate desuccinylase (377 aa).

His68 lines the Zn(2+) pocket. The active site involves Asp70. Asp101 serves as a coordination point for Zn(2+). Glu135 acts as the Proton acceptor in catalysis. 3 residues coordinate Zn(2+): Glu136, Glu164, and His350.

It belongs to the peptidase M20A family. DapE subfamily. Homodimer. The cofactor is Zn(2+). Co(2+) is required as a cofactor.

The catalysed reaction is N-succinyl-(2S,6S)-2,6-diaminopimelate + H2O = (2S,6S)-2,6-diaminopimelate + succinate. Its pathway is amino-acid biosynthesis; L-lysine biosynthesis via DAP pathway; LL-2,6-diaminopimelate from (S)-tetrahydrodipicolinate (succinylase route): step 3/3. Catalyzes the hydrolysis of N-succinyl-L,L-diaminopimelic acid (SDAP), forming succinate and LL-2,6-diaminopimelate (DAP), an intermediate involved in the bacterial biosynthesis of lysine and meso-diaminopimelic acid, an essential component of bacterial cell walls. The sequence is that of Succinyl-diaminopimelate desuccinylase from Vibrio cholerae serotype O1 (strain ATCC 39541 / Classical Ogawa 395 / O395).